Here is a 172-residue protein sequence, read N- to C-terminus: Bifunctional protein PyrR (172 aa).

The PRPP-binding motif lies at 93 to 105 (VILIDDVLYTGRT).

It belongs to the purine/pyrimidine phosphoribosyltransferase family. PyrR subfamily. In terms of assembly, homodimer and homohexamer; in equilibrium.

It catalyses the reaction UMP + diphosphate = 5-phospho-alpha-D-ribose 1-diphosphate + uracil. Its function is as follows. Regulates transcriptional attenuation of the pyrimidine nucleotide (pyr) operon by binding in a uridine-dependent manner to specific sites on pyr mRNA. This disrupts an antiterminator hairpin in the RNA and favors formation of a downstream transcription terminator, leading to a reduced expression of downstream genes. In terms of biological role, also displays a weak uracil phosphoribosyltransferase activity which is not physiologically significant. The sequence is that of Bifunctional protein PyrR from Streptococcus sanguinis (strain SK36).